The following is a 335-amino-acid chain: Probable cyclin-H (335 aa).

This sequence belongs to the cyclin family. Cyclin C subfamily.

The protein resides in the nucleus. Its function is as follows. Regulates CDK7, the catalytic subunit of the CDK-activating kinase (CAK) enzymatic complex. The sequence is that of Probable cyclin-H (CYCH) from Echinococcus multilocularis (Fox tapeworm).